The sequence spans 504 residues: Anaerobic nitric oxide reductase transcription regulator NorR (504 aa).

Asp-57 carries the post-translational modification 4-aspartylphosphate. Positions Met-187–Val-416 constitute a Sigma-54 factor interaction domain. Residues Gly-215–Glu-222 and Ala-278–Glu-287 each bind ATP. The H-T-H motif DNA-binding region spans Trp-479–Lys-498.

It participates in nitrogen metabolism; nitric oxide reduction. Functionally, required for the expression of anaerobic nitric oxide (NO) reductase, acts as a transcriptional activator for at least the norVW operon. Activation also requires sigma-54. The sequence is that of Anaerobic nitric oxide reductase transcription regulator NorR from Escherichia coli (strain 55989 / EAEC).